The following is a 634-amino-acid chain: Dynein axonemal assembly factor 1 (634 aa).

Residues 1–80 (MHPEVSEPPV…SRDDREDRGP (80 aa)) are disordered. Residues 22 to 42 (AGDHGDAGPGIRKEEISETKE) are compositionally biased toward basic and acidic residues. Polar residues predominate over residues 48–62 (CTTSCPSQQQPSGDN). Over residues 70-80 (HSRDDREDRGP) the composition is skewed to basic and acidic residues. 6 LRR repeats span residues 101–123 (ALNDTLYLHFKGFDRIENLEEYT), 124–145 (GLRCLWLECNGIQRIENLQAQS), 146–167 (ELRCLFLQVNLLHKIENLEPLQ), 168–189 (KLDALNLSNNYIKTIENLSCLP), 190–211 (VLNTLQMAHNRLETVADIEHLR), and 215–236 (RLCVLDLSHNALSDPEILSVLE). The LRRCT domain occupies 249 to 288 (NPVTKHIPNYRRTVTVRLKHLTYLDDRPVFPKDRACAEAW). The segment covering 326-336 (EERKKARDRGE) has biased composition (basic and acidic residues). The disordered stretch occupies residues 326–358 (EERKKARDRGETPLPDSEGSIPTSPEAEEKQPM). S349 is subject to Phosphoserine. Phosphothreonine is present on T462. Residues S465 and S488 each carry the phosphoserine modification. Disordered stretches follow at residues 481–505 (ISSLSDDSDPELDELSLSTSEATPT) and 559–634 (ELND…FGLD).

The protein belongs to the DNAAF1 family.

The protein resides in the cell projection. It localises to the cilium. Its function is as follows. Cilium-specific protein required for the stability of the ciliary architecture. Plays a role in cytoplasmic preassembly of dynein arms. Involved in regulation of microtubule-based cilia and actin-based brush border microvilli. This Mus musculus (Mouse) protein is Dynein axonemal assembly factor 1 (Dnaaf1).